The sequence spans 74 residues: QVFDQACKGIYDRAIFKKLELVCDDCYNLYRKPKVATTCRENCYANSVFRQCLDDLLLINVVDEYISGVQIVGK.

A Pyrrolidone carboxylic acid modification is found at Q1. Intrachain disulfides connect C7/C43, C23/C39, and C26/C52. V72 is modified (valine amide).

The protein localises to the secreted. In terms of biological role, inhibits Y-organs where molting hormone (ecdysteroid) is secreted. A molting cycle is initiated when MIH secretion diminishes or stops. This is Molt-inhibiting hormone from Procambarus bouvieri (Mexican crayfish).